The sequence spans 483 residues: MRAQPAASHFVDGRPLEDAAGAPIPVIHPANGEEIARLHEATPAVIEAALASGARAQKDWAALRPVERARILRRASDLIRARNEELSILETLDTGKPLQETLVADWPSGADALEFFAGLAPAVTGETVPLGQDFVYTIREPLGLCVGIGAWNYPSQIACWKAAPALALGNAMVFKPSEVTPLGALKLAEILIEAGLPPGLFNVVQGRGAVGAALVSDSRVAKVSLTGSVPTGRRVYAAAAEGVRHVTMELGGKSPLIVFDDADLESAIGAAMLGNFYSSGQICSNGTRVFVQKGIKEAFLARLAERADAIQMGDPLDPEVQMGPLVSPAQLEKVLSYIEKARAEGGRLVCGGEASVSPGCYVQPTVFADVTDGMTLAREEVFGPVMAVLDFETEEEVIARANATDFGLAAGVFTADLTRAHRVVAQLQAGTCWINAYNLTPVEAPFGGVKMSGVGRENGRAAVEHYTQVKSVYVGMGPVDAPY.

K(+) is bound by residues Ile-27 and Asp-93. 149–151 (GAW) provides a ligand contact to NAD(+). The active-site Charge relay system is Lys-161. Residue 175-178 (KPSE) coordinates NAD(+). Val-179 contributes to the K(+) binding site. Residue 228 to 231 (SVPT) coordinates NAD(+). Val-243 lines the K(+) pocket. The active-site Proton acceptor is Glu-249. 3 residues coordinate NAD(+): Gly-251, Cys-283, and Glu-380. Cys-283 (nucleophile) is an active-site residue. Cys-283 carries the cysteine sulfenic acid (-SOH) modification. K(+) is bound by residues Lys-450 and Gly-453. Glu-457 acts as the Charge relay system in catalysis.

Belongs to the aldehyde dehydrogenase family. As to quaternary structure, dimer of dimers. K(+) is required as a cofactor.

It catalyses the reaction betaine aldehyde + NAD(+) + H2O = glycine betaine + NADH + 2 H(+). Its pathway is amine and polyamine biosynthesis; betaine biosynthesis via choline pathway; betaine from betaine aldehyde: step 1/1. Its function is as follows. Involved in the biosynthesis of the osmoprotectant glycine betaine. Catalyzes the irreversible oxidation of betaine aldehyde to the corresponding acid. This chain is Betaine aldehyde dehydrogenase, found in Cereibacter sphaeroides (strain ATCC 17025 / ATH 2.4.3) (Rhodobacter sphaeroides).